The sequence spans 505 residues: Deoxyguanosinetriphosphate triphosphohydrolase (505 aa).

In terms of domain architecture, HD spans Arg-66–Cys-273.

It belongs to the dGTPase family. Type 1 subfamily. In terms of assembly, homotetramer. Mg(2+) is required as a cofactor.

It carries out the reaction dGTP + H2O = 2'-deoxyguanosine + triphosphate + H(+). Its function is as follows. dGTPase preferentially hydrolyzes dGTP over the other canonical NTPs. This Escherichia coli O127:H6 (strain E2348/69 / EPEC) protein is Deoxyguanosinetriphosphate triphosphohydrolase.